The following is a 467-amino-acid chain: Gamma-aminobutyric acid receptor subunit gamma-3 (467 aa).

Positions 1–17 (MAPKLLLLLCLFSGLHA) are cleaved as a signal peptide. At 18 to 256 (RSRKVEEDEY…FELSRRMGYF (239 aa)) the chain is on the extracellular side. An N-linked (GlcNAc...) asparagine glycan is attached at N110. A disulfide bridge connects residues C171 and C185. N-linked (GlcNAc...) asparagine glycosylation occurs at N228. A helical membrane pass occupies residues 257-277 (TIQTYIPCILTVVLSWVSFWI). Over 278–283 (KKDATP) the chain is Cytoplasmic. A helical transmembrane segment spans residues 284 to 303 (ARTALGITTVLTMTTLSTIA). The Extracellular portion of the chain corresponds to 304-311 (RKSLPRVS). The helical transmembrane segment at 312-332 (YVTAMDLFVTVCFLFVFAALM) threads the bilayer. The Cytoplasmic portion of the chain corresponds to 333-446 (EYATLNYYSS…DILELDSYSR (114 aa)). A helical transmembrane segment spans residues 447–467 (VFFPTSFLLFNLVYWVGYLYL).

Belongs to the ligand-gated ion channel (TC 1.A.9) family. Gamma-aminobutyric acid receptor (TC 1.A.9.5) subfamily. GABRG3 sub-subfamily. In terms of assembly, heteropentamer, formed by a combination of alpha (GABRA1-6), beta (GABRB1-3), gamma (GABRG1-3), delta (GABRD), epsilon (GABRE), rho (GABRR1-3), pi (GABRP) and theta (GABRQ) chains, each subunit exhibiting distinct physiological and pharmacological properties. May be palmitoylated. In terms of tissue distribution, expressed in brain.

The protein localises to the postsynaptic cell membrane. It localises to the cell membrane. The catalysed reaction is chloride(in) = chloride(out). Functionally, gamma subunit of the heteropentameric ligand-gated chloride channel gated by gamma-aminobutyric acid (GABA), a major inhibitory neurotransmitter in the brain. GABA-gated chloride channels, also named GABA(A) receptors (GABAAR), consist of five subunits arranged around a central pore and contain GABA active binding site(s) located at the alpha and beta subunit interface(s). When activated by GABA, GABAARs selectively allow the flow of chloride across the cell membrane down their electrochemical gradient. The chain is Gamma-aminobutyric acid receptor subunit gamma-3 from Homo sapiens (Human).